The chain runs to 462 residues: MNEGQVVQVIGPVVDVEFASDRLPDLYNAITIKTDKINITMEAMQHLGNNTVRCVALSSTDGLQRGMKAVDTGQPITVPVGRATLGRLFNVLGEPIDNQGPVETTERLPIHRPAPSFEEQQPSTEVLETGIKVVDLLAPYAKGGKIGLFGGAGVGKTVLIMELIRNIAYEHGGFSVFSGVGERTREGNDLYLEMKESGVLEKTALVFGQMNEPPGARLRVGLTGLTMAEYFRDAEGQDVLLFIDNIFRFVQAGSEVSALLGRMPSAVGYQPTLATEMGALQERITSTKKGSITSVQAIYVPADDLTDPAPATTFAHLDATTVLSRQIAELGIYPAVDPLDSTSRILDPRVLGEEHYQVARGVQQVLQRYKELQDIIAILGMDELSEEDKLIVARARKIQRFLSQPFHVAEAFTGQPGVYVPLKETIRGFKEILEGRHDNLPEQAFYMVGTIDEAVKKGQELM.

Glycine 150–threonine 157 is a binding site for ATP.

Belongs to the ATPase alpha/beta chains family. F-type ATPases have 2 components, CF(1) - the catalytic core - and CF(0) - the membrane proton channel. CF(1) has five subunits: alpha(3), beta(3), gamma(1), delta(1), epsilon(1). CF(0) has three main subunits: a(1), b(2) and c(9-12). The alpha and beta chains form an alternating ring which encloses part of the gamma chain. CF(1) is attached to CF(0) by a central stalk formed by the gamma and epsilon chains, while a peripheral stalk is formed by the delta and b chains. In this bacterium the a and b subunits are transcribed but do not seem to be translated, thus the ATP synthase consists of the alpha, beta, gamma, delta, epsilon and c subunits.

It is found in the cell membrane. It catalyses the reaction ATP + H2O + 4 H(+)(in) = ADP + phosphate + 5 H(+)(out). Functionally, produces ATP from ADP in the presence of a proton gradient across the membrane. The catalytic sites are hosted primarily by the beta subunits. This is ATP synthase subunit beta from Moorella thermoacetica (strain ATCC 39073 / JCM 9320).